The primary structure comprises 232 residues: Lipoprotein-releasing system ATP-binding protein LolD (232 aa).

The 222-residue stretch at 11–232 (IEVTDLQRAF…LHDGRLIEEY (222 aa)) folds into the ABC transporter domain. 47-54 (GPSGAGKS) lines the ATP pocket.

Belongs to the ABC transporter superfamily. Lipoprotein translocase (TC 3.A.1.125) family. In terms of assembly, the complex is composed of two ATP-binding proteins (LolD) and two transmembrane proteins (LolC and LolE).

It is found in the cell inner membrane. In terms of biological role, part of the ABC transporter complex LolCDE involved in the translocation of mature outer membrane-directed lipoproteins, from the inner membrane to the periplasmic chaperone, LolA. Responsible for the formation of the LolA-lipoprotein complex in an ATP-dependent manner. In Zymomonas mobilis subsp. mobilis (strain ATCC 10988 / DSM 424 / LMG 404 / NCIMB 8938 / NRRL B-806 / ZM1), this protein is Lipoprotein-releasing system ATP-binding protein LolD.